An 862-amino-acid polypeptide reads, in one-letter code: Rab GTPase-binding effector protein 1 (862 aa).

N-acetylalanine is present on alanine 2. Residues 11 to 328 (DVSLQQRVAE…KDQEEDEQQR (318 aa)) adopt a coiled-coil conformation. Position 282 is an N6-acetyllysine (lysine 282). Disordered stretches follow at residues 315-340 (ELKK…KIDT) and 355-374 (EESS…THGS). 3 positions are modified to phosphoserine: serine 374, serine 377, and serine 407. Threonine 408 is modified (phosphothreonine). Serine 410 is modified (phosphoserine). The stretch at 534-816 (DMCSNYEKQL…LQTELDVSEQ (283 aa)) forms a coiled coil.

It belongs to the rabaptin family. Heterodimer with RABGEF1. The heterodimer binds RAB4A and RAB5A that have been activated by GTP-binding. Interacts with TSC2. Interacts with GGA1 (via GAE domain), GGA2 (via GAE domain) and GGA3 (via GAE domain). Interacts with AP1G1 (via GAE domain). Interacts with AP1G2 (via GAE domain). Interacts with ECPAS. Interacts with KCNH1. Interacts with PKD1 (via C-terminal domain) and GGA1; the interactions recruit PKD1:PKD2 complex to GGA1 and ARL3 at trans-Golgi network. Interacts with KCNH1. In terms of processing, proteolytic cleavage by caspases in apoptotic cells causes loss of endosome fusion activity.

It localises to the cytoplasm. The protein resides in the early endosome. The protein localises to the recycling endosome. Its subcellular location is the cytoplasmic vesicle. In terms of biological role, rab effector protein acting as linker between gamma-adaptin, RAB4A and RAB5A. Involved in endocytic membrane fusion and membrane trafficking of recycling endosomes. Involved in KCNH1 channels trafficking to and from the cell membrane. Stimulates RABGEF1 mediated nucleotide exchange on RAB5A. Mediates the traffic of PKD1:PKD2 complex from the endoplasmic reticulum through the Golgi to the cilium. This chain is Rab GTPase-binding effector protein 1 (Rabep1), found in Rattus norvegicus (Rat).